A 618-amino-acid chain; its full sequence is Uptake hydrogenase large subunit (618 aa).

C75, C78, C597, and C600 together coordinate Ni(2+).

This sequence belongs to the [NiFe]/[NiFeSe] hydrogenase large subunit family. In terms of assembly, heterodimer of a large and a small subunit. It depends on Ni(2+) as a cofactor.

It localises to the cell membrane. The enzyme catalyses H2 + A = AH2. Its function is as follows. This enzyme recycles the H(2) produced by nitrogenase to increase the production of ATP and to protect nitrogenase against inhibition or damage by O(2) under carbon- or phosphate-limited conditions. In Cupriavidus necator (strain ATCC 17699 / DSM 428 / KCTC 22496 / NCIMB 10442 / H16 / Stanier 337) (Ralstonia eutropha), this protein is Uptake hydrogenase large subunit (hoxG).